A 249-amino-acid chain; its full sequence is 2,3-bisphosphoglycerate-dependent phosphoglycerate mutase (249 aa).

Residues 9–16 (RHGQSQWN), 22–23 (TG), Arg-61, 88–91 (ERHY), Lys-99, 115–116 (RR), and 184–185 (GN) contribute to the substrate site. Catalysis depends on His-10, which acts as the Tele-phosphohistidine intermediate. The active-site Proton donor/acceptor is Glu-88.

It belongs to the phosphoglycerate mutase family. BPG-dependent PGAM subfamily. In terms of assembly, homodimer.

The catalysed reaction is (2R)-2-phosphoglycerate = (2R)-3-phosphoglycerate. The protein operates within carbohydrate degradation; glycolysis; pyruvate from D-glyceraldehyde 3-phosphate: step 3/5. Its function is as follows. Catalyzes the interconversion of 2-phosphoglycerate and 3-phosphoglycerate. The chain is 2,3-bisphosphoglycerate-dependent phosphoglycerate mutase from Xanthomonas oryzae pv. oryzae (strain MAFF 311018).